The chain runs to 1221 residues: Adhesion G-protein coupled receptor G6 (1221 aa).

The N-terminal stretch at 1–37 (MMFRSDRMWSCHWKWKPSPLLFLFALYIMCVPHSVWG) is a signal peptide. Residues 38 to 862 (CANCRVVLSN…ASQLDARNTK (825 aa)) are Extracellular-facing. Residues Cys41 and Cys67 are joined by a disulfide bond. Residues 41–149 (CRVVLSNPSG…KGFNASYIRV (109 aa)) form the CUB domain. Positions 89 and 97 each coordinate Ca(2+). Cysteines 94 and 111 form a disulfide. Asn121 carries N-linked (GlcNAc...) asparagine glycosylation. Residues Asp134, Ser136, and Ile137 each coordinate Ca(2+). N-linked (GlcNAc...) asparagine glycosylation is found at Asn143, Asn206, Asn258, Asn314, Asn324, Asn353, Asn438, Asn445, Asn452, Asn485, Asn488, and Asn505. The Pentraxin (PTX) domain maps to 154-356 (RNQKVILPQT…ALKAESNLSC (203 aa)). 2 cysteine pairs are disulfide-bonded: Cys186-Cys254 and Cys231-Cys277. A mediates interaction with laminin-2 region spans residues 473 to 837 (EPRLVLWALL…SDASETVCLC (365 aa)). Disulfide bonds link Cys525/Cys560 and Cys548/Cys580. N-linked (GlcNAc...) asparagine glycosylation is found at Asn563, Asn593, Asn600, Asn605, Asn667, Asn673, Asn695, Asn704, Asn750, Asn776, Asn811, and Asn818. A GAIN-B domain is found at 670–853 (SHVNITTRNL…GVLMDLPRSA (184 aa)). 2 disulfides stabilise this stretch: Cys803–Cys835 and Cys822–Cys837. Positions 803 to 853 (CAFWDLNKNKSFGGWNTSGCVAHRDSDASETVCLCNHFTHFGVLMDLPRSA) are GPS. Positions 842 to 850 (HFGVLMDLP) are stachel. A helical membrane pass occupies residues 863 to 883 (VLTFISYIGCGISAIFSAATL). At 884–903 (LTYVAFEKLRRDYPSKILMN) the chain is on the cytoplasmic side. Residues 904-924 (LSTALLFLNLLFLLDGWITSF) form a helical membrane-spanning segment. At 925–929 (NVDGL) the chain is on the extracellular side. Residues 930–950 (CIAVAVLLHFFLLATFTWMGL) traverse the membrane as a helical segment. Residues 951-970 (EAIHMYIALVKVFNTYIRRY) are Cytoplasmic-facing. A helical transmembrane segment spans residues 971 to 991 (ILKFCIIGWGLPALVVSVVLA). Residues 992–1024 (SRNNNEVYGKESYGKEKGDEFCWIQDPVIFYVT) are Extracellular-facing. The helical transmembrane segment at 1025 to 1045 (CAGYFGVMFFLNIAMFIVVMV) threads the bilayer. Residues 1046 to 1069 (QICGRNGKRSNRTLREEVLRNLRS) are Cytoplasmic-facing. A helical transmembrane segment spans residues 1070–1090 (VVSLTFLLGMTWGFAFFAWGP). Residues 1091–1092 (LN) are Extracellular-facing. The helical transmembrane segment at 1093 to 1113 (IPFMYLFSIFNSLQGLFIFIF) threads the bilayer. Residue Asn1103 coordinates 17alpha-hydroxyprogesterone. The Cytoplasmic segment spans residues 1114–1221 (HCAMKENVQK…GQVLVKTGPC (108 aa)). The segment at 1156–1176 (NLGKSLSSSSIGSNSTYLTSK) is disordered. A phosphoserine mark is found at Ser1165 and Ser1168.

The protein belongs to the G-protein coupled receptor 2 family. Adhesion G-protein coupled receptor (ADGR) subfamily. As to quaternary structure, heterodimer of 2 chains generated by proteolytic processing; the large extracellular N-terminal fragment and the membrane-bound C-terminal fragment predominantly remain associated and non-covalently linked. Interacts with Laminin-2; this interaction stabilizes the receptor in an inactive state. Laminin-2 polymerization could facilitate ADGRG6-NTF removal, thereby exposing the tethered agonist to drive myelination. Interacts with PRNP. Interacts with ITGB1. Interacts with LRP1. Post-translationally, proteolytically cleaved into 2 conserved sites: one in the GPS region of the GAIN-B domain (S1 site) and the other in the middle of the extracellular domain (S2 site). The proteolytic cleavage at S1 site generates an extracellular subunit and a seven-transmembrane subunit. Furin is involved in the cleavage of the S2 site generating a soluble fragment. Processing at the GPS region occurred independent of and probably prior to the cleavage at the S2 site. Proteolytic cleavage is required for activation of the receptor. In terms of processing, highly glycosylated. Expressed in placenta and to a lower extent in pancreas and liver. Detected in aortic endothelial cells but not in skin microvascular endothelial cells.

Its subcellular location is the cell membrane. Forms a heterodimer of 2 chains generated by proteolytic processing that remain associated through non-covalent interactions mediated by the GAIN-B domain. In the inactivated receptor, the Stachel sequence (also named stalk) is embedded in the GAIN-B domain, where it adopts a beta-strand conformation. On activation, the Stachel moves into the 7 transmembrane region and adopts a twisted hook-shaped configuration that forms contacts within the receptor, leading to coupling of a G-alpha protein, which activates signaling. The cleaved GAIN-B and N-terminal domains can then dissociate from the rest of the receptor. Its function is as follows. Adhesion G-protein coupled receptor (aGPCR) for steroid hormones, such as progesterone and 17alpha-hydroxyprogesterone (17OHP). Involved in many biological processes, such as myelination, sprouting angiogenesis, placenta, ear and cartilage development. Ligand binding causes a conformation change that triggers signaling via guanine nucleotide-binding proteins (G proteins) and modulates the activity of downstream effectors, such as adenylate cyclase. ADGRG6 is coupled to G(i) G alpha proteins and mediates inhibition of adenylate cyclase. Also able to couple to G(q) G proteins. Involved in myelination of the peripheral nervous system: required for differentiation of promyelinating Schwann cells and for normal myelination of axons. Also acts as a regulator of body length and bone mass. Acts as a regulator of blood-brain barrier formation in the central nervous system vie its association with LRP1 and ITGB1. This Homo sapiens (Human) protein is Adhesion G-protein coupled receptor G6.